A 57-amino-acid chain; its full sequence is UPF0391 membrane protein NE0130 (57 aa).

Transmembrane regions (helical) follow at residues 1–21 and 33–53; these read MLKW…FGFR and FLFF…LLGI.

The protein belongs to the UPF0391 family.

It is found in the cell membrane. The polypeptide is UPF0391 membrane protein NE0130 (Nitrosomonas europaea (strain ATCC 19718 / CIP 103999 / KCTC 2705 / NBRC 14298)).